The following is a 183-amino-acid chain: Deoxyuridine 5'-triphosphate nucleotidohydrolase (183 aa).

Residues 67–69, Asn80, 84–86, and Lys94 each bind substrate; these read RSG and TID. Positions 138–183 are disordered; it reads RAEGGFGSTGGHAGLDPASGTSGQVAEGGPTGGNRYASVVSDREGQ. Positions 141 to 150 are enriched in gly residues; the sequence is GGFGSTGGHA.

It belongs to the dUTPase family. Requires Mg(2+) as cofactor.

The catalysed reaction is dUTP + H2O = dUMP + diphosphate + H(+). Its pathway is pyrimidine metabolism; dUMP biosynthesis; dUMP from dCTP (dUTP route): step 2/2. Functionally, this enzyme is involved in nucleotide metabolism: it produces dUMP, the immediate precursor of thymidine nucleotides and it decreases the intracellular concentration of dUTP so that uracil cannot be incorporated into DNA. The polypeptide is Deoxyuridine 5'-triphosphate nucleotidohydrolase (Streptomyces coelicolor (strain ATCC BAA-471 / A3(2) / M145)).